A 1505-amino-acid polypeptide reads, in one-letter code: ABC transporter C family member 13 (1505 aa).

12 helical membrane-spanning segments follow: residues glutamate 11–leucine 31, alanine 54–tryptophan 68, alanine 71–valine 91, alanine 102–glutamine 122, phenylalanine 131–tyrosine 151, methionine 171–glycine 191, alanine 313–valine 333, leucine 336–alanine 356, tryptophan 367–tyrosine 387, alanine 421–leucine 441, isoleucine 447–alanine 467, and phenylalanine 534–leucine 554. One can recognise an ABC transmembrane type-1 1 domain in the interval phenylalanine 314–glutamine 589. Residues isoleucine 623 to alanine 846 form the ABC transporter 1 domain. Glycine 658–serine 665 lines the ATP pocket. The segment covering aspartate 881–arginine 897 has biased composition (polar residues). The interval aspartate 881–glutamate 919 is disordered. Basic and acidic residues predominate over residues lysine 904–glutamate 919. The next 6 membrane-spanning stretches (helical) occupy residues glycine 940 to serine 960, serine 980 to valine 1000, isoleucine 1055 to serine 1077, tryptophan 1081 to alanine 1103, leucine 1149 to leucine 1169, and leucine 1174 to isoleucine 1194. The region spanning leucine 945 to arginine 1215 is the ABC transmembrane type-1 2 domain. Residues isoleucine 1262–serine 1496 enclose the ABC transporter 2 domain. Glycine 1296 to serine 1303 is an ATP binding site.

Belongs to the ABC transporter superfamily. ABCC family. Conjugate transporter (TC 3.A.1.208) subfamily.

It localises to the membrane. Its function is as follows. ABC transporter that may affect phytic acid transport and compartmentalization. May function directly or indirectly in removing phytic acid from the cytosol or in vesicle trafficking. Required for phytic acid accumulation in developing seeds. Phytic acid is the primary storage form of phosphorus in cereal grains and other plant seeds. This is ABC transporter C family member 13 from Oryza sativa subsp. indica (Rice).